A 168-amino-acid polypeptide reads, in one-letter code: Photosystem I assembly protein Ycf3 (168 aa).

3 TPR repeats span residues 35 to 68 (AFTY…EIDP), 72 to 105 (SYIL…NPFL), and 120 to 153 (GEQA…TPGN).

The protein belongs to the Ycf3 family.

It localises to the plastid. The protein localises to the chloroplast thylakoid membrane. Essential for the assembly of the photosystem I (PSI) complex. May act as a chaperone-like factor to guide the assembly of the PSI subunits. This is Photosystem I assembly protein Ycf3 from Piper cenocladum (Ant piper).